The chain runs to 396 residues: Elongation factor Tu (396 aa).

The tr-type G domain maps to 10–206; sequence KPHVNIGTIG…AVDNYIPEPE (197 aa). The G1 stretch occupies residues 19–26; sequence GHVDHGKT. 19-26 is a binding site for GTP; the sequence is GHVDHGKT. T26 lines the Mg(2+) pocket. The interval 60–64 is G2; sequence GITIA. The segment at 81–84 is G3; the sequence is DCPG. GTP contacts are provided by residues 81–85 and 136–139; these read DCPGH and NKAD. The tract at residues 136–139 is G4; the sequence is NKAD. The interval 174 to 176 is G5; that stretch reads SAL.

It belongs to the TRAFAC class translation factor GTPase superfamily. Classic translation factor GTPase family. EF-Tu/EF-1A subfamily. Monomer.

It localises to the cytoplasm. The catalysed reaction is GTP + H2O = GDP + phosphate + H(+). Its function is as follows. GTP hydrolase that promotes the GTP-dependent binding of aminoacyl-tRNA to the A-site of ribosomes during protein biosynthesis. The chain is Elongation factor Tu from Geobacter sulfurreducens (strain ATCC 51573 / DSM 12127 / PCA).